A 421-amino-acid polypeptide reads, in one-letter code: Lipid II:glycine glycyltransferase (421 aa).

Belongs to the FemABX family. In terms of assembly, monomer.

The protein resides in the cytoplasm. It carries out the reaction beta-D-GlcNAc-(1-&gt;4)-Mur2Ac(oyl-L-Ala-D-isoglutaminyl-L-Lys-D-Ala-D-Ala)-di-trans,octa-cis-undecaprenyl diphosphate + glycyl-tRNA(Gly) = beta-D-GlcNAc-(1-&gt;4)-Mur2Ac(oyl-L-Ala-D-isoglutaminyl-L-Lys-(N(6)-Gly)-D-Ala-D-Ala)-di-trans,octa-cis-undecaprenyl diphosphate + tRNA(Gly) + H(+). Functionally, catalyzes the incorporation of the first glycine of the pentaglycine interpeptide bridge, which is characteristic of the S.aureus peptidoglycan. This glycine is added to the epsilon-amino group of the L-lysine of the membrane-bound lipid II intermediate (GlcNAc-(beta-1,4)-N-acetylmuramic acid(-L-Ala-D-iGln-L-Lys-D-Ala-D-Ala)-pyrophosphoryl-undecaprenol), using glycyl-tRNA(Gly) as donor, in a ribosome-independent mechanism. Involved in methicillin resistance. The polypeptide is Lipid II:glycine glycyltransferase (femX) (Staphylococcus aureus (strain Mu50 / ATCC 700699)).